A 243-amino-acid chain; its full sequence is Adenylate kinase 4 (243 aa).

Position 40 to 45 (40 to 45 (GSGKGT)) interacts with ATP. Residues 60-89 (ATGDMLRAAVAAKTPLGVKAKEAMDKGELV) form an NMP region. AMP-binding positions include threonine 61, arginine 66, 87 to 89 (ELV), 115 to 118 (GFPR), and glutamine 122. The segment at 156-193 (GRWIHPSSGRSYHTKFAPPKVPGVDDVTGEPLIQRKDD) is LID. Residue arginine 157 coordinates ATP. AMP is bound by residues arginine 190 and arginine 201.

It belongs to the adenylate kinase family.

Its subcellular location is the cytoplasm. The catalysed reaction is AMP + ATP = 2 ADP. In terms of biological role, catalyzes the reversible transfer of the terminal phosphate group between ATP and AMP. Plays an important role in cellular energy homeostasis and in adenine nucleotide metabolism. This chain is Adenylate kinase 4 (ADK-B), found in Oryza sativa subsp. japonica (Rice).